We begin with the raw amino-acid sequence, 264 residues long: S-adenosylmethionine decarboxylase proenzyme (264 aa).

The Schiff-base intermediate with substrate; via pyruvic acid role is filled by Ser-112. At Ser-112 the chain carries Pyruvic acid (Ser); by autocatalysis. The active-site Proton acceptor; for processing activity is His-117. Residue Cys-140 is the Proton donor; for catalytic activity of the active site.

Belongs to the prokaryotic AdoMetDC family. Type 2 subfamily. In terms of assembly, heterooctamer of four alpha and four beta chains arranged as a tetramer of alpha/beta heterodimers. Pyruvate is required as a cofactor. Is synthesized initially as an inactive proenzyme. Formation of the active enzyme involves a self-maturation process in which the active site pyruvoyl group is generated from an internal serine residue via an autocatalytic post-translational modification. Two non-identical subunits are generated from the proenzyme in this reaction, and the pyruvate is formed at the N-terminus of the alpha chain, which is derived from the carboxyl end of the proenzyme. The post-translation cleavage follows an unusual pathway, termed non-hydrolytic serinolysis, in which the side chain hydroxyl group of the serine supplies its oxygen atom to form the C-terminus of the beta chain, while the remainder of the serine residue undergoes an oxidative deamination to produce ammonia and the pyruvoyl group blocking the N-terminus of the alpha chain.

The catalysed reaction is S-adenosyl-L-methionine + H(+) = S-adenosyl 3-(methylsulfanyl)propylamine + CO2. The protein operates within amine and polyamine biosynthesis; S-adenosylmethioninamine biosynthesis; S-adenosylmethioninamine from S-adenosyl-L-methionine: step 1/1. Its function is as follows. Catalyzes the decarboxylation of S-adenosylmethionine to S-adenosylmethioninamine (dcAdoMet), the propylamine donor required for the synthesis of the polyamines spermine and spermidine from the diamine putrescine. This chain is S-adenosylmethionine decarboxylase proenzyme, found in Escherichia coli O45:K1 (strain S88 / ExPEC).